Here is an 86-residue protein sequence, read N- to C-terminus: UPF0297 protein BBR47_19030 (86 aa).

The protein belongs to the UPF0297 family.

This is UPF0297 protein BBR47_19030 from Brevibacillus brevis (strain 47 / JCM 6285 / NBRC 100599).